Consider the following 322-residue polypeptide: ATP-dependent 6-phosphofructokinase (322 aa).

Gly12 provides a ligand contact to ATP. 22-26 contacts ADP; that stretch reads RATAK. ATP contacts are provided by residues 73–74 and 103–106; these read RS and GDGS. Mg(2+) is bound at residue Asp104. 127-129 is a binding site for substrate; sequence TID. Asp129 serves as the catalytic Proton acceptor. Arg156 lines the ADP pocket. Substrate-binding positions include Arg164 and 171 to 173; that span reads MGR. ADP is bound by residues 187 to 189 and 215 to 217; these read GGD and KLH. Substrate contacts are provided by residues Glu224, Arg245, and 251 to 254; that span reads HIQR.

The protein belongs to the phosphofructokinase type A (PFKA) family. ATP-dependent PFK group I subfamily. Prokaryotic clade 'B1' sub-subfamily. Homotetramer. Mg(2+) serves as cofactor.

Its subcellular location is the cytoplasm. The catalysed reaction is beta-D-fructose 6-phosphate + ATP = beta-D-fructose 1,6-bisphosphate + ADP + H(+). Its pathway is carbohydrate degradation; glycolysis; D-glyceraldehyde 3-phosphate and glycerone phosphate from D-glucose: step 3/4. Its activity is regulated as follows. Allosterically activated by ADP and other diphosphonucleosides, and allosterically inhibited by phosphoenolpyruvate. Its function is as follows. Catalyzes the phosphorylation of D-fructose 6-phosphate to fructose 1,6-bisphosphate by ATP, the first committing step of glycolysis. The protein is ATP-dependent 6-phosphofructokinase of Fusobacterium nucleatum subsp. nucleatum (strain ATCC 25586 / DSM 15643 / BCRC 10681 / CIP 101130 / JCM 8532 / KCTC 2640 / LMG 13131 / VPI 4355).